A 430-amino-acid chain; its full sequence is S-adenosylmethionine synthase (430 aa).

His14 is a binding site for ATP. Asp16 provides a ligand contact to Mg(2+). Position 42 (Glu42) interacts with K(+). L-methionine is bound by residues Glu55 and Gln98. The interval 98 to 108 (QSPDINRGVER) is flexible loop. ATP-binding positions include 164–166 (DAK), 254–255 (KF), Asp263, 269–270 (RK), Ala286, and Lys290. Asp263 contributes to the L-methionine binding site. Lys294 contacts L-methionine.

It belongs to the AdoMet synthase family. In terms of assembly, homotetramer; dimer of dimers. It depends on Mg(2+) as a cofactor. The cofactor is K(+).

The protein localises to the cytoplasm. The catalysed reaction is L-methionine + ATP + H2O = S-adenosyl-L-methionine + phosphate + diphosphate. The protein operates within amino-acid biosynthesis; S-adenosyl-L-methionine biosynthesis; S-adenosyl-L-methionine from L-methionine: step 1/1. Catalyzes the formation of S-adenosylmethionine (AdoMet) from methionine and ATP. The overall synthetic reaction is composed of two sequential steps, AdoMet formation and the subsequent tripolyphosphate hydrolysis which occurs prior to release of AdoMet from the enzyme. This Bacteroides thetaiotaomicron (strain ATCC 29148 / DSM 2079 / JCM 5827 / CCUG 10774 / NCTC 10582 / VPI-5482 / E50) protein is S-adenosylmethionine synthase.